The chain runs to 1324 residues: Structural maintenance of chromosomes protein 4 (1324 aa).

Residues 1–24 (MSDKGIFRTSSTPSIVDVTPDRGE) form a disordered region. The residue at position 19 (T19) is a Phosphothreonine; by CDC2. Residue 155–162 (GPNGSGKS) coordinates ATP. Coiled coils occupy residues 310 to 337 (QELS…AKLE) and 370 to 628 (NKKT…KASL). The 114-residue stretch at 651-764 (NGFFGRLGDL…KNLEQANRIA (114 aa)) folds into the SMC hinge domain. Coiled coils occupy residues 825 to 1077 (YRQH…MSNL) and 1297 to 1324 (LSSR…ILTD).

Belongs to the SMC family. SMC4 subfamily. As to quaternary structure, forms a heterodimer with cut14/smc2. Component of the condensin complex, which contains the smc2 and smc4 heterodimer, and three non smc subunits that probably regulate the complex: cnd1, cnd2 and cnd3. Interacts with C1739.07. In terms of processing, phosphorylated by CDC2 on Thr-19 at metaphase.

Its subcellular location is the nucleus. It is found in the cytoplasm. The protein localises to the chromosome. Central component of the condensin complex, a complex required for conversion of interphase chromatin into mitotic-like condense chromosomes. The condensin complex probably introduces positive supercoils into relaxed DNA in the presence of type I topoisomerases and converts nicked DNA into positive knotted forms in the presence of type II topoisomerases. The polypeptide is Structural maintenance of chromosomes protein 4 (cut3) (Schizosaccharomyces pombe (strain 972 / ATCC 24843) (Fission yeast)).